The following is a 144-amino-acid chain: Probable disulfide formation protein (144 aa).

The helical transmembrane segment at 10-29 threads the bilayer; the sequence is WNLLLLTWLVALISTLSALF. A disulfide bond links cysteine 39 and cysteine 42. 2 consecutive transmembrane segments (helical) span residues 44–63 and 70–87; these read FQRA…CYRS and YALP…VHTL. A disulfide bond links cysteine 100 and cysteine 107. The chain crosses the membrane as a helical span at residues 116–138; sequence GVVPLPALALFAFIIIAILLIII.

It belongs to the DsbB family. BdbC subfamily.

The protein localises to the cell inner membrane. Its function is as follows. Required for disulfide bond formation in some proteins. This is Probable disulfide formation protein from Metapseudomonas resinovorans (Pseudomonas resinovorans).